We begin with the raw amino-acid sequence, 368 residues long: MNLPIERYADLLAEKAKNLTALLVPFNPPELEVFESETSHFRMRAEFRVWHDTNEVGENELYHIMFDQETKQRYRVEQFPIANHLINKMMSSLLAEIKGNELLTRKLFQVDYLSTLSGEIAVSMLYHKKLNEEWQAEAAALKARLEHQGFKVQIIGRATKQKIALDRDYVEEVLPVDGRNLIYRQVENSFTQPNAKMNIKMLEWARSCTRHSSGDLLELYCGNGNFSIALAENFRQVLATEISKSSVQSAQYNIEQNGIDNLQIIRMSAEEFTQAMNGVREFNRLKGIDLKAYDCNTIFVDPPRAGLDQDTLNMVQAYERILYISCNPYTLAENLRQLSLTHRIERAALFDQFPYTHHVESGVWLIRK.

Glutamine 192, tyrosine 220, asparagine 225, glutamate 241, and aspartate 301 together coordinate S-adenosyl-L-methionine. The Nucleophile role is filled by cysteine 326. Glutamate 360 functions as the Proton acceptor in the catalytic mechanism.

This sequence belongs to the class I-like SAM-binding methyltransferase superfamily. RNA M5U methyltransferase family. TrmA subfamily.

The enzyme catalyses uridine(54) in tRNA + S-adenosyl-L-methionine = 5-methyluridine(54) in tRNA + S-adenosyl-L-homocysteine + H(+). It catalyses the reaction uridine(341) in tmRNA + S-adenosyl-L-methionine = 5-methyluridine(341) in tmRNA + S-adenosyl-L-homocysteine + H(+). Dual-specificity methyltransferase that catalyzes the formation of 5-methyluridine at position 54 (m5U54) in all tRNAs, and that of position 341 (m5U341) in tmRNA (transfer-mRNA). The sequence is that of tRNA/tmRNA (uracil-C(5))-methyltransferase from Actinobacillus pleuropneumoniae serotype 7 (strain AP76).